The primary structure comprises 340 residues: Photosystem II protein D1 (340 aa).

Helical transmembrane passes span 25–42, 114–129, and 138–152; these read YIGW…LATV, HFFL…EWEF, and WIFV…AAAA. H114 contacts chlorophyll a. W122 is a binding site for pheophytin a. Residues D166 and E185 each coordinate [CaMn4O5] cluster. A helical transmembrane segment spans residues 193 to 214; that stretch reads FHILGVAGVFGGSLFSAMHGSL. H194 is a chlorophyll a binding site. Residues H211 and 260-261 contribute to the a quinone site; that span reads SF. H211 contributes to the Fe cation binding site. H268 provides a ligand contact to Fe cation. Residues 270–284 traverse the membrane as a helical segment; sequence FLAAWPVIGIWITSL. [CaMn4O5] cluster is bound by residues H328, E329, D338, and A340.

This sequence belongs to the reaction center PufL/M/PsbA/D family. As to quaternary structure, PSII is composed of 1 copy each of membrane proteins PsbA, PsbB, PsbC, PsbD, PsbE, PsbF, PsbH, PsbI, PsbJ, PsbK, PsbL, PsbM, PsbT, PsbX, PsbY, PsbZ, Psb30/Ycf12, at least 3 peripheral proteins of the oxygen-evolving complex and a large number of cofactors. It forms dimeric complexes. The D1/D2 heterodimer binds P680, chlorophylls that are the primary electron donor of PSII, and subsequent electron acceptors. It shares a non-heme iron and each subunit binds pheophytin, quinone, additional chlorophylls, carotenoids and lipids. D1 provides most of the ligands for the Mn4-Ca-O5 cluster of the oxygen-evolving complex (OEC). There is also a Cl(-1) ion associated with D1 and D2, which is required for oxygen evolution. The PSII complex binds additional chlorophylls, carotenoids and specific lipids. serves as cofactor. In terms of processing, tyr-157 forms a radical intermediate that is referred to as redox-active TyrZ, YZ or Y-Z.

Its subcellular location is the plastid. It localises to the chloroplast thylakoid membrane. It catalyses the reaction 2 a plastoquinone + 4 hnu + 2 H2O = 2 a plastoquinol + O2. In terms of biological role, photosystem II (PSII) is a light-driven water:plastoquinone oxidoreductase that uses light energy to abstract electrons from H(2)O, generating O(2) and a proton gradient subsequently used for ATP formation. It consists of a core antenna complex that captures photons, and an electron transfer chain that converts photonic excitation into a charge separation. The D1/D2 (PsbA/PsbD) reaction center heterodimer binds P680, the primary electron donor of PSII as well as several subsequent electron acceptors. In Amphidinium carterae (Dinoflagellate), this protein is Photosystem II protein D1.